Here is a 492-residue protein sequence, read N- to C-terminus: Glutamyl-tRNA(Gln) amidotransferase subunit A (492 aa).

Residues Lys-80 and Ser-155 each act as charge relay system in the active site. Ser-179 acts as the Acyl-ester intermediate in catalysis.

Belongs to the amidase family. GatA subfamily. In terms of assembly, heterotrimer of A, B and C subunits.

The catalysed reaction is L-glutamyl-tRNA(Gln) + L-glutamine + ATP + H2O = L-glutaminyl-tRNA(Gln) + L-glutamate + ADP + phosphate + H(+). Allows the formation of correctly charged Gln-tRNA(Gln) through the transamidation of misacylated Glu-tRNA(Gln) in organisms which lack glutaminyl-tRNA synthetase. The reaction takes place in the presence of glutamine and ATP through an activated gamma-phospho-Glu-tRNA(Gln). The protein is Glutamyl-tRNA(Gln) amidotransferase subunit A of Mycobacteroides abscessus (strain ATCC 19977 / DSM 44196 / CCUG 20993 / CIP 104536 / JCM 13569 / NCTC 13031 / TMC 1543 / L948) (Mycobacterium abscessus).